The following is a 901-amino-acid chain: Aconitate hydratase A (901 aa).

3 residues coordinate [4Fe-4S] cluster: Cys443, Cys509, and Cys512.

It belongs to the aconitase/IPM isomerase family. In terms of assembly, monomer. It depends on [4Fe-4S] cluster as a cofactor.

It carries out the reaction citrate = D-threo-isocitrate. It catalyses the reaction (2S,3R)-3-hydroxybutane-1,2,3-tricarboxylate = 2-methyl-cis-aconitate + H2O. It functions in the pathway carbohydrate metabolism; tricarboxylic acid cycle; isocitrate from oxaloacetate: step 2/2. Its pathway is organic acid metabolism; propanoate degradation. Functionally, involved in the catabolism of short chain fatty acids (SCFA) via the tricarboxylic acid (TCA)(acetyl degradation route) and probably the 2-methylcitrate cycle I (propionate degradation route). Catalyzes the reversible isomerization of citrate to isocitrate via cis-aconitate. Could catalyze the hydration of 2-methyl-cis-aconitate to yield (2R,3S)-2-methylisocitrate. The apo form of AcnA functions as a RNA-binding regulatory protein. The sequence is that of Aconitate hydratase A (acnA) from Staphylococcus epidermidis (strain ATCC 35984 / DSM 28319 / BCRC 17069 / CCUG 31568 / BM 3577 / RP62A).